The primary structure comprises 383 residues: uncharacterized protein (383 aa).

The protein belongs to the peptidase M20 family.

This is an uncharacterized protein from Staphylococcus aureus (strain USA300).